The primary structure comprises 365 residues: Probable UDP-arabinopyranose mutase 1 (365 aa).

The DXD motif motif lies at 100 to 102 (DDD). R148 carries an N-linked (Glc...) arginine glycan.

The protein belongs to the RGP family. In terms of assembly, homopentamer or homohexamer. It depends on Mn(2+) as a cofactor. Mg(2+) serves as cofactor. In terms of processing, reversibly glycosylated by UDP-glucose, UDP-xylose and UDP-galactose, but not UDP-mannose. Expressed in all tissues tested, including root, tuber, leaf, petiole, shoot, stolon and stem.

It is found in the secreted. The protein resides in the cell wall. Its subcellular location is the cell junction. The protein localises to the plasmodesma. It localises to the golgi apparatus. It catalyses the reaction UDP-beta-L-arabinofuranose = UDP-beta-L-arabinopyranose. In terms of biological role, probable UDP-L-arabinose mutase involved in the biosynthesis of cell wall non-cellulosic polysaccharides. Was initially shown to possess an autoglycosylating activity which is dependent on the presence of UDP-glucose and manganese. This is Probable UDP-arabinopyranose mutase 1 from Solanum tuberosum (Potato).